The primary structure comprises 167 residues: Ribosome maturation factor RimM (167 aa).

The PRC barrel domain occupies 94-165 (EHEYYYSDII…TIKITPMEGL (72 aa)).

The protein belongs to the RimM family. In terms of assembly, binds ribosomal protein uS19.

It is found in the cytoplasm. Its function is as follows. An accessory protein needed during the final step in the assembly of 30S ribosomal subunit, possibly for assembly of the head region. Essential for efficient processing of 16S rRNA. May be needed both before and after RbfA during the maturation of 16S rRNA. It has affinity for free ribosomal 30S subunits but not for 70S ribosomes. In Staphylococcus epidermidis (strain ATCC 12228 / FDA PCI 1200), this protein is Ribosome maturation factor RimM.